The sequence spans 147 residues: D-aminoacyl-tRNA deacylase (147 aa).

The Gly-cisPro motif, important for rejection of L-amino acids signature appears at 136–137 (GP).

The protein belongs to the DTD family. Homodimer.

The protein resides in the cytoplasm. The enzyme catalyses glycyl-tRNA(Ala) + H2O = tRNA(Ala) + glycine + H(+). The catalysed reaction is a D-aminoacyl-tRNA + H2O = a tRNA + a D-alpha-amino acid + H(+). An aminoacyl-tRNA editing enzyme that deacylates mischarged D-aminoacyl-tRNAs. Also deacylates mischarged glycyl-tRNA(Ala), protecting cells against glycine mischarging by AlaRS. Acts via tRNA-based rather than protein-based catalysis; rejects L-amino acids rather than detecting D-amino acids in the active site. By recycling D-aminoacyl-tRNA to D-amino acids and free tRNA molecules, this enzyme counteracts the toxicity associated with the formation of D-aminoacyl-tRNA entities in vivo and helps enforce protein L-homochirality. This Sulfurihydrogenibium sp. (strain YO3AOP1) protein is D-aminoacyl-tRNA deacylase.